The sequence spans 936 residues: Protocadherin gamma-A10 (936 aa).

An N-terminal signal peptide occupies residues 1-32; it reads MAAQRNRSKESKDCSGLVLLCLFFGIPWEAGA. Cadherin domains are found at residues 33-137, 138-246, 247-351, 352-456, 457-566, and 574-687; these read RQIS…APKF, QAEN…APVF, TLPE…SPEL, TITS…PPTF, SQVS…APEI, and DGST…SPAN. Residues 33–696 lie on the Extracellular side of the membrane; the sequence is RQISYSIPEE…NSETSDLTLY (664 aa). Asn51 carries an N-linked (GlcNAc...) asparagine glycan. Residues Asn423 and Asn549 are each glycosylated (N-linked (GlcNAc...) asparagine). A helical transmembrane segment spans residues 697–717; that stretch reads LVVAVAAVSCVFLAFVIVLLA. The Cytoplasmic segment spans residues 718-936; the sequence is HRLRRWHKSR…KKKSGKKEKK (219 aa). Disordered regions lie at residues 806–845 and 906–936; these read EDTP…WPNN and ATLT…KEKK. Positions 820-845 are enriched in polar residues; the sequence is WRFSQAQRPGTSGSQNGDDTGTWPNN. The segment covering 926-936 has biased composition (basic residues); that stretch reads NKKKSGKKEKK.

It localises to the cell membrane. In terms of biological role, potential calcium-dependent cell-adhesion protein. May be involved in the establishment and maintenance of specific neuronal connections in the brain. This Homo sapiens (Human) protein is Protocadherin gamma-A10 (PCDHGA10).